The chain runs to 310 residues: GPN-loop GTPase 2 (310 aa).

N-acetylalanine is present on alanine 2. GTP is bound at residue 19–24; it reads GSGKTT. Positions 76-78 match the Gly-Pro-Asn (GPN)-loop; involved in dimer interface motif; the sequence is GPN. A GTP-binding site is contributed by 178–181; sequence SKMD.

The protein belongs to the GPN-loop GTPase family. As to quaternary structure, heterodimers with GPN1 or GPN3. Binds to RNA polymerase II (RNAPII).

In terms of biological role, small GTPase required for proper localization of RNA polymerase II and III (RNAPII and RNAPIII). May act at an RNAP assembly step prior to nuclear import. The protein is GPN-loop GTPase 2 of Sus scrofa (Pig).